Reading from the N-terminus, the 817-residue chain is Cargo-transport protein YPP1 (817 aa).

This sequence belongs to the YPP1 family. Interacts with STT4 and ribosomes.

The protein localises to the cytoplasmic granule. The protein resides in the cell membrane. In terms of biological role, involved in endocytosis. The sequence is that of Cargo-transport protein YPP1 (YPP1) from Saccharomyces cerevisiae (strain YJM789) (Baker's yeast).